The chain runs to 396 residues: Acetate kinase (396 aa).

Asn-6 is a Mg(2+) binding site. Lys-13 is an ATP binding site. Position 89 (Arg-89) interacts with substrate. Catalysis depends on Asp-145, which acts as the Proton donor/acceptor. ATP is bound by residues 205–209 (HLGNG), 280–282 (DMR), and 329–333 (GVGEN). Glu-383 contacts Mg(2+).

The protein belongs to the acetokinase family. Homodimer. Mg(2+) is required as a cofactor. The cofactor is Mn(2+).

It is found in the cytoplasm. The enzyme catalyses acetate + ATP = acetyl phosphate + ADP. It participates in metabolic intermediate biosynthesis; acetyl-CoA biosynthesis; acetyl-CoA from acetate: step 1/2. Its function is as follows. Catalyzes the formation of acetyl phosphate from acetate and ATP. Can also catalyze the reverse reaction. This Mesoplasma florum (strain ATCC 33453 / NBRC 100688 / NCTC 11704 / L1) (Acholeplasma florum) protein is Acetate kinase.